Consider the following 555-residue polypeptide: MDKRHDPSRRIIAPHGTQLSCKSWLTEAPMRMLMNNLHPDVAERPEDLVVYGGIGRAARDWDCYDKIIEVLQRLEDDETLLVQSGKPVGVFRTHADAPRVLIANSNLVPHWANWEHFNELDKLGLAMYGQMTAGSWIYIGTQGIVQGTYETFVSVAKQHFDGISKGKWILTGGLGGMGGAQTLAGTMAGFSVLACEVDETRIDFRLRTRYVDKKATSLDEALAMIEEANQAGKPVSVGLLANAADVFAELVKRGVTPDVVTDQTSAHDPLNGYLPQGWTMAEAAAMRKTDEAAVIKAAKASMAVQVQAMLDLQTAGAATLDYGNNIRQMAFEMGVENAFDFPGFVPAYIRPLFCEGIGPFRWVALSGDPEDIYKTDAKVKELIPDNPHLHNWLDMARERIAFQGLPARICWVGLKDRARLALAFNEMVKNGELSAPVVIGRDHLDSGSVASPNRETESMLDGSDAVSDWPLLNALLNTASGATWVSLHHGGGVGMGFSQHSGVVIVCDGTDAAAKRVGRVLWNDPATGVMRHADAGYEIAKNCAKEQGLDLPMQD.

NAD(+) is bound by residues Gly-52–Gly-53, Gln-130, Gly-176–Gly-178, Glu-196, Arg-201, Asn-242–Ala-243, Gln-263–His-267, Tyr-273–Leu-274, and Tyr-322. Cys-410 is a catalytic residue. Position 492 (Gly-492) interacts with NAD(+).

This sequence belongs to the urocanase family. NAD(+) is required as a cofactor.

It localises to the cytoplasm. It carries out the reaction 4-imidazolone-5-propanoate = trans-urocanate + H2O. It functions in the pathway amino-acid degradation; L-histidine degradation into L-glutamate; N-formimidoyl-L-glutamate from L-histidine: step 2/3. In terms of biological role, catalyzes the conversion of urocanate to 4-imidazolone-5-propionate. The sequence is that of Urocanate hydratase from Shewanella baltica (strain OS195).